The chain runs to 251 residues: 7-cyano-7-deazaguanine synthase (251 aa).

Residues 1 to 21 (MSDLPRHSPRRQHAGESAVTA) form a disordered region. Residue 35 to 45 (YSGGMDSYTVL) coordinates ATP. Zn(2+) contacts are provided by C212, C220, C223, and C226.

Belongs to the QueC family. It depends on Zn(2+) as a cofactor.

It catalyses the reaction 7-carboxy-7-deazaguanine + NH4(+) + ATP = 7-cyano-7-deazaguanine + ADP + phosphate + H2O + H(+). Its pathway is purine metabolism; 7-cyano-7-deazaguanine biosynthesis. Functionally, catalyzes the ATP-dependent conversion of 7-carboxy-7-deazaguanine (CDG) to 7-cyano-7-deazaguanine (preQ(0)). The sequence is that of 7-cyano-7-deazaguanine synthase from Chromohalobacter salexigens (strain ATCC BAA-138 / DSM 3043 / CIP 106854 / NCIMB 13768 / 1H11).